A 423-amino-acid chain; its full sequence is Mannose-6-phosphate isomerase (423 aa).

Ala2 carries the N-acetylalanine modification. A phosphoserine mark is found at Ser102 and Ser108. Zn(2+)-binding residues include Gln110, His112, Glu137, and His276. Residue Arg295 is part of the active site.

Belongs to the mannose-6-phosphate isomerase type 1 family. It depends on Zn(2+) as a cofactor.

The protein resides in the cytoplasm. It catalyses the reaction D-mannose 6-phosphate = D-fructose 6-phosphate. Its pathway is nucleotide-sugar biosynthesis; GDP-alpha-D-mannose biosynthesis; alpha-D-mannose 1-phosphate from D-fructose 6-phosphate: step 1/2. Its function is as follows. Isomerase that catalyzes the interconversion of fructose-6-P and mannose-6-P and has a critical role in the supply of D-mannose derivatives required for many eukaryotic glycosylation reactions. In Bos taurus (Bovine), this protein is Mannose-6-phosphate isomerase (MPI).